We begin with the raw amino-acid sequence, 495 residues long: Germacrene A acid 8-beta-hydroxylase (495 aa).

Residues 3 to 23 (PFTTFSLVASSLILLICWALV) traverse the membrane as a helical; Signal-anchor for type II membrane protein segment. Asn-103 is a glycosylation site (N-linked (GlcNAc...) asparagine). Residue Cys-433 coordinates heme.

Belongs to the cytochrome P450 family. Requires heme as cofactor. As to expression, mostly expressed in leaves and flowers, and, to a lower extent, in roots and stems.

The protein resides in the membrane. It catalyses the reaction germacra-1(10),4,11(13)-trien-12-oate + reduced [NADPH--hemoprotein reductase] + O2 = 8beta-hydroxygermacra-1(10),4,11(13)-trien-12-oate + oxidized [NADPH--hemoprotein reductase] + H2O + H(+). The catalysed reaction is germacra-1(10),4,11(13)-trien-12-oate + reduced [NADPH--hemoprotein reductase] + O2 = 8-epi-inunolide + oxidized [NADPH--hemoprotein reductase] + 2 H2O. The enzyme catalyses germacra-1(10),4,11(13)-trien-12-oate + reduced [NADPH--hemoprotein reductase] + O2 = 8alpha-hydroxygermacra-1(10),4,11(13)-trien-12-oate + oxidized [NADPH--hemoprotein reductase] + H2O + H(+). It functions in the pathway secondary metabolite biosynthesis; terpenoid biosynthesis. Functionally, involved in the biosynthesis of germacrene-derived sesquiterpene lactones. Hydroxylates germacrene A acid to 8-beta-hydroxy-germacrene A and 8-alpha-hydroxy-germacrene A acids. Unlike 8-alpha-hydroxy-germacrene A acid with is spontaneously converted into inunolide (12, 8-alpha), 8-beta-hydroxy-germacrene A cannot undergo spontaneous lactonization. The polypeptide is Germacrene A acid 8-beta-hydroxylase (Inula hupehensis (Inula helianthus-aquatilis subsp. hupehensis)).